Here is a 141-residue protein sequence, read N- to C-terminus: Deoxyuridine 5'-triphosphate nucleotidohydrolase (141 aa).

The protein belongs to the dUTPase family. Mg(2+) serves as cofactor.

The enzyme catalyses dUTP + H2O = dUMP + diphosphate + H(+). It functions in the pathway pyrimidine metabolism; dUMP biosynthesis; dUMP from dCTP (dUTP route): step 2/2. This enzyme is involved in nucleotide metabolism: it produces dUMP, the immediate precursor of thymidine nucleotides and it decreases the intracellular concentration of dUTP so that uracil cannot be incorporated into DNA. In Chlorella (PBCV-1), this protein is Deoxyuridine 5'-triphosphate nucleotidohydrolase.